We begin with the raw amino-acid sequence, 116 residues long: MTTIIFLFSITIAVAVVLGLAAHALPNRTSDSEKSSPYECGFDPLNSARLPFSFRFFLVAILFLLFDLEIALLFPLPAASLITPPSTLIPISMVFMVILTLGLVFEWINGGLEWAE.

A run of 3 helical transmembrane segments spans residues 4-24 (IIFLFSITIAVAVVLGLAAHA), 56-76 (FFLVAILFLLFDLEIALLFPL), and 88-108 (LIPISMVFMVILTLGLVFEWI).

It belongs to the complex I subunit 3 family.

Its subcellular location is the mitochondrion membrane. It catalyses the reaction a ubiquinone + NADH + 5 H(+)(in) = a ubiquinol + NAD(+) + 4 H(+)(out). Core subunit of the mitochondrial membrane respiratory chain NADH dehydrogenase (Complex I) that is believed to belong to the minimal assembly required for catalysis. Complex I functions in the transfer of electrons from NADH to the respiratory chain. The immediate electron acceptor for the enzyme is believed to be ubiquinone. This chain is NADH-ubiquinone oxidoreductase chain 3 (ND3), found in Strongylocentrotus purpuratus (Purple sea urchin).